The primary structure comprises 1216 residues: Protein WWC3 (1216 aa).

A disordered region spans residues 1-63; the sequence is MPWLSGGRRR…RESAELPLPA (63 aa). Over residues 21-51 the composition is skewed to pro residues; sequence EPPPSAQPQREPPPAPPAAVPTPPAPSAPPP. 2 WW domains span residues 59-92 and 106-139; these read LPLPAGWEEARDYDGRVFYIDHNTRQTSWIDPRD and DELPLGWETVYDKQIGVYYMDHINKLTQIEDPRE. 2 coiled-coil regions span residues 164-250 and 354-468; these read KEIY…TLQE and DRVR…EATR. Disordered regions lie at residues 487-508, 546-612, and 634-668; these read VSSGSSRGSLASSRGSLASSRG, GRDA…ADSC, and DLPGMAALQPHGVPGDGEGPHERGPPPASAPVGGT. A compositionally biased stretch (low complexity) spans 570–598; that stretch reads PQSLASLSSRSSLSSLSPPSSPLDTPFLP. The C2 domain occupies 722–847; it reads SNGDPQIHVG…SLSEMQLRWH (126 aa). Positions 885 to 936 form a coiled coil; it reads DAVTVLLARTTAQLQAVERELAEERAKLEYTEEEVLEMERKEEQAEAISERS. The segment at 1060–1079 is interaction with PRKCZ; that stretch reads SPFVRNTLERRTLRYKQSCR. Residues 1091 to 1160 are a coiled coil; it reads LDLELDLQAS…RQTRQTKLDY (70 aa).

Belongs to the WWC family. In terms of assembly, forms homodimers and heterodimers with WWC1 and WWC2. Interacts with DLC1 and PRKCZ. Interacts (via WW domains) with LATS1 and LATS2.

It localises to the cytoplasm. The protein localises to the cytosol. Regulator of the Hippo signaling pathway, also known as the Salvador-Warts-Hippo (SWH) pathway. Enhances phosphorylation of LATS1 and YAP1 and negatively regulates cell proliferation and organ growth due to a suppression of the transcriptional activity of YAP1, the major effector of the Hippo pathway. The polypeptide is Protein WWC3 (Homo sapiens (Human)).